Consider the following 215-residue polypeptide: Redox-sensing transcriptional repressor Rex (215 aa).

The segment at residues 18-57 (LYYRFLKNLHASGKQRVSSAELSEAVKVDPATIRRDFSYF) is a DNA-binding region (H-T-H motif). 92–97 (GVGNLG) is a binding site for NAD(+).

Belongs to the transcriptional regulatory Rex family. Homodimer.

Its subcellular location is the cytoplasm. Its function is as follows. Modulates transcription in response to changes in cellular NADH/NAD(+) redox state. The protein is Redox-sensing transcriptional repressor Rex of Geobacillus sp. (strain WCH70).